Here is a 599-residue protein sequence, read N- to C-terminus: Glutamine--fructose-6-phosphate aminotransferase [isomerizing] (599 aa).

Catalysis depends on Cys2, which acts as the Nucleophile; for GATase activity. Positions 2 to 223 (CGIIGYIGNE…DRDIVILRKE (222 aa)) constitute a Glutamine amidotransferase type-2 domain. 2 SIS domains span residues 286–423 (LGKE…IIGK) and 452–589 (IAEE…VDKP). The active-site For Fru-6P isomerization activity is the Lys594.

In terms of assembly, homodimer.

The protein resides in the cytoplasm. The enzyme catalyses D-fructose 6-phosphate + L-glutamine = D-glucosamine 6-phosphate + L-glutamate. In terms of biological role, catalyzes the first step in hexosamine metabolism, converting fructose-6P into glucosamine-6P using glutamine as a nitrogen source. The polypeptide is Glutamine--fructose-6-phosphate aminotransferase [isomerizing] (glmS) (Methanococcus maripaludis (strain DSM 14266 / JCM 13030 / NBRC 101832 / S2 / LL)).